Here is a 491-residue protein sequence, read N- to C-terminus: Cytochrome P450 2H2 (491 aa).

Position 436 (Cys436) interacts with heme.

This sequence belongs to the cytochrome P450 family. The cofactor is heme.

It is found in the endoplasmic reticulum membrane. Its subcellular location is the microsome membrane. It carries out the reaction an organic molecule + reduced [NADPH--hemoprotein reductase] + O2 = an alcohol + oxidized [NADPH--hemoprotein reductase] + H2O + H(+). Functionally, cytochromes P450 are a group of heme-thiolate monooxygenases. In liver microsomes, this enzyme is involved in an NADPH-dependent electron transport pathway. It oxidizes a variety of structurally unrelated compounds, including steroids, fatty acids, and xenobiotics. This is Cytochrome P450 2H2 (CYP2H2) from Gallus gallus (Chicken).